Reading from the N-terminus, the 156-residue chain is LIM domain only protein 3 (156 aa).

2 consecutive LIM zinc-binding domains span residues lysine 22–valine 84 and glycine 86–lysine 148.

The chain is LIM domain only protein 3 from Xenopus laevis (African clawed frog).